The sequence spans 492 residues: Tyrosinase-like protein 1 (492 aa).

Positions 1–22 (MDKMRTLQSLIVKLTLLYGALC) are cleaved as a signal peptide. Positions 147, 155, 164, 289, 293, and 316 each coordinate Cu cation. The interval 472–492 (SEPPLQLEGPSFTSSFDDPRI) is disordered. Residues 482 to 492 (SFTSSFDDPRI) are compositionally biased toward polar residues.

Cu(2+) serves as cofactor. As to expression, prismatic layer of shell (at protein level). Expressed primarily in the mantle with highest level in the mantle edge and lower level in the mantle pallium.

It localises to the secreted. In Margaritifera margaritifera (Freshwater pearl mussel), this protein is Tyrosinase-like protein 1.